Consider the following 80-residue polypeptide: DNA-binding protein HU-like (80 aa).

Belongs to the bacterial histone-like protein family.

In terms of biological role, histone-like DNA-binding protein which is capable of wrapping DNA to stabilize it, and thus to prevent its denaturation under extreme environmental conditions. This Rickettsia rickettsii (strain Sheila Smith) protein is DNA-binding protein HU-like.